The primary structure comprises 102 residues: MEIGIAHYLTVSAILFTLGVFGIFLNRKNVIVILMSIELILLSVNLNFVAFSSQLGDLVGQVFALFVLTVAAAEAAIGLAILVVFFRNRGSIAVEDVNVMKG.

3 helical membrane-spanning segments follow: residues 5 to 25 (IAHY…GIFL), 31 to 51 (IVIL…FVAF), and 66 to 86 (FVLT…VVFF).

The protein belongs to the complex I subunit 4L family. As to quaternary structure, NDH-1 is composed of 14 different subunits. Subunits NuoA, H, J, K, L, M, N constitute the membrane sector of the complex.

The protein resides in the cell inner membrane. The catalysed reaction is a quinone + NADH + 5 H(+)(in) = a quinol + NAD(+) + 4 H(+)(out). In terms of biological role, NDH-1 shuttles electrons from NADH, via FMN and iron-sulfur (Fe-S) centers, to quinones in the respiratory chain. The immediate electron acceptor for the enzyme in this species is believed to be ubiquinone. Couples the redox reaction to proton translocation (for every two electrons transferred, four hydrogen ions are translocated across the cytoplasmic membrane), and thus conserves the redox energy in a proton gradient. This Brucella abortus (strain S19) protein is NADH-quinone oxidoreductase subunit K.